Consider the following 240-residue polypeptide: Ribonuclease 3 (240 aa).

An RNase III domain is found at 13 to 143 (DHASLLEALG…LLGAVHLQHG (131 aa)). A Mg(2+)-binding site is contributed by glutamate 53. Aspartate 57 is an active-site residue. The Mg(2+) site is built by aspartate 129 and glutamate 132. Glutamate 132 is a catalytic residue. The 69-residue stretch at 170 to 238 (DWKTSLQELT…AGAAYQALTA (69 aa)) folds into the DRBM domain.

Belongs to the ribonuclease III family. Homodimer. Mg(2+) is required as a cofactor.

It localises to the cytoplasm. It carries out the reaction Endonucleolytic cleavage to 5'-phosphomonoester.. Its function is as follows. Digests double-stranded RNA. Involved in the processing of primary rRNA transcript to yield the immediate precursors to the large and small rRNAs (23S and 16S). Processes some mRNAs, and tRNAs when they are encoded in the rRNA operon. Processes pre-crRNA and tracrRNA of type II CRISPR loci if present in the organism. The protein is Ribonuclease 3 of Nocardia farcinica (strain IFM 10152).